Here is a 202-residue protein sequence, read N- to C-terminus: Histone chaperone ASF1B (202 aa).

The tract at residues 1 to 156 is interaction with histone H3 and CHAF1B; it reads MAKVSVLNVA…TRFHINWDNN (156 aa). Phosphoserine; by TLK2 is present on Ser-198.

Belongs to the ASF1 family. As to quaternary structure, interacts with histone H3 (via C-terminus), including histone H3.1, H3.2 and H3.3, and histone H4; the interaction with H3 is direct. Interacts with the CHAF1A, CHAF1B and RBBP4 subunits of the CAF-1 complex. Interacts with HAT1, NASP and TAF1. Found in a soluble complex with NASP and histones H3 and H4; the interaction with NASP is probably indirect and mediated by H3-H4. Interacts with CDAN1. Found in a cytosolic complex with CDAN1, ASF1A, IPO4 and histones H3.1 and H4. Interacts with CREBBP. Post-translationally, phosphorylated by TLK2. Phosphorylated by TLK1. In terms of tissue distribution, highly expressed in germ cells. Restricted to premeiotic to meiotic stages during spermatogenesis.

It localises to the nucleus. The protein localises to the cytoplasm. It is found in the cytosol. Histone chaperone that facilitates histone deposition and histone exchange and removal during nucleosome assembly and disassembly. Cooperates with chromatin assembly factor 1 (CAF-1) to promote replication-dependent chromatin assembly. Also involved in the nuclear import of the histone H3-H4 dimer together with importin-4 (IPO4): specifically recognizes and binds newly synthesized histones with the monomethylation of H3 'Lys-9' (H3K9me1) and diacetylation at 'Lys-5' and 'Lys-12' of H4 (H4K5ac and H4K12ac) marks in the cytosol. Does not participate in replication-independent nucleosome deposition which is mediated by ASF1A and HIRA. Required for gonad development. This chain is Histone chaperone ASF1B, found in Mus musculus (Mouse).